The sequence spans 708 residues: Polyribonucleotide nucleotidyltransferase (708 aa).

D486 and D492 together coordinate Mg(2+). Positions 553–612 (PRIIKFKINPEKIRDVIGKGGAVIRALTEETGTTIDISDDGSVTIACVSSEGGEQARKRI) constitute a KH domain. In terms of domain architecture, S1 motif spans 622 to 690 (GRIYEGTVLK…EKGRLRLSMK (69 aa)).

The protein belongs to the polyribonucleotide nucleotidyltransferase family. It depends on Mg(2+) as a cofactor.

It localises to the cytoplasm. The enzyme catalyses RNA(n+1) + phosphate = RNA(n) + a ribonucleoside 5'-diphosphate. Functionally, involved in mRNA degradation. Catalyzes the phosphorolysis of single-stranded polyribonucleotides processively in the 3'- to 5'-direction. This is Polyribonucleotide nucleotidyltransferase from Nitrosomonas europaea (strain ATCC 19718 / CIP 103999 / KCTC 2705 / NBRC 14298).